A 31-amino-acid polypeptide reads, in one-letter code: Photosystem I reaction center subunit XII (31 aa).

The helical transmembrane segment at 7-26 (QVYVALVIALLPAVLAFRLS) threads the bilayer.

It belongs to the PsaM family.

It localises to the cellular thylakoid membrane. The protein is Photosystem I reaction center subunit XII of Thermosynechococcus vestitus (strain NIES-2133 / IAM M-273 / BP-1).